The following is a 346-amino-acid chain: Ribosomal RNA small subunit methyltransferase H (346 aa).

S-adenosyl-L-methionine-binding positions include 47-49 (GGY), D65, F92, D113, and Q120. The interval 294–346 (AVEPGSDEVAGNPRARSAKLRAAERTDAPAHPDGDLAGLLPADLSQRRGRRRS) is disordered. Residues 314–327 (RAAERTDAPAHPDG) show a composition bias toward basic and acidic residues. Over residues 328–337 (DLAGLLPADL) the composition is skewed to low complexity.

The protein belongs to the methyltransferase superfamily. RsmH family.

It localises to the cytoplasm. The catalysed reaction is cytidine(1402) in 16S rRNA + S-adenosyl-L-methionine = N(4)-methylcytidine(1402) in 16S rRNA + S-adenosyl-L-homocysteine + H(+). Functionally, specifically methylates the N4 position of cytidine in position 1402 (C1402) of 16S rRNA. The polypeptide is Ribosomal RNA small subunit methyltransferase H (Azorhizobium caulinodans (strain ATCC 43989 / DSM 5975 / JCM 20966 / LMG 6465 / NBRC 14845 / NCIMB 13405 / ORS 571)).